Reading from the N-terminus, the 902-residue chain is Adhesion G-protein coupled receptor D1 (902 aa).

The N-terminal stretch at 1 to 25 is a signal peptide; sequence MKKLLPLCCWHSWLLLFYCDFQVRG. The Extracellular segment spans residues 26–598; it reads AHTRSHVHPG…GHQVALSSIS (573 aa). Residues asparagine 68, asparagine 76, asparagine 83, asparagine 89, asparagine 121, asparagine 183, asparagine 217, asparagine 310, asparagine 330, asparagine 337, asparagine 347, asparagine 422, asparagine 504, asparagine 529, and asparagine 561 are each glycosylated (N-linked (GlcNAc...) asparagine). The Pentraxin (PTX) domain maps to 111–304; the sequence is KGVTFLYYRK…VNTMAPTNAY (194 aa). One can recognise a GAIN-B domain in the interval 399-585; it reads QVAIVGSSSM…AILMQVVPLE (187 aa). Disulfide bonds link cysteine 538/cysteine 567 and cysteine 555/cysteine 569. Residues 538 to 585 form a GPS region; it reads CAFLDFSSGEGIWSNQGCALTEGNLSYSICRCTHLTNFAILMQVVPLE. Positions 574–582 are stachel; the sequence is NFAILMQVV. Glutamine 591 provides a ligand contact to 17beta-hydroxy-5alpha-androstan-3-one. The helical transmembrane segment at 599 to 619 threads the bilayer; sequence YIGCSLSVLCLAITLVTFAVL. The Cytoplasmic segment spans residues 620–630; it reads SSVSTIRNQRY. Residues 631 to 651 form a helical membrane-spanning segment; it reads HIHANLSCAVLVAQVLLLISF. Over 652-661 the chain is Extracellular; that stretch reads RFEPGTAPCQ. The cysteines at positions 660 and 732 are disulfide-linked. The chain crosses the membrane as a helical span at residues 662 to 682; the sequence is VLAMLLHYFFLSAFAWMLVEG. Topologically, residues 683-702 are cytoplasmic; it reads LHLYSMVIKVFGSEDSKHRY. The helical transmembrane segment at 703 to 723 threads the bilayer; sequence YYGIGWGFPLLICIISIVFAM. Topologically, residues 724-739 are extracellular; it reads DSYGTSKNCWLSLGNG. A helical membrane pass occupies residues 740 to 760; it reads AIWAFVAPALFIIVVNIGILI. At 761-788 the chain is on the cytoplasmic side; it reads AVTRVISQISAENYKIHGDPSAFKLTAK. Residues 789–809 form a helical membrane-spanning segment; the sequence is AVAVLLPILGTSWVFGVLAVN. Residues 810-812 lie on the Extracellular side of the membrane; that stretch reads NQA. A helical transmembrane segment spans residues 813–833; sequence MVFQYMFAILNSLQGFFIFLF. The Cytoplasmic portion of the chain corresponds to 834-902; it reads HCLLNSEVRA…SGHRVDLSAV (69 aa). The interval 865-902 is disordered; sequence KPFSSDIMNGTRPATGSTRLSPWDKSSHSGHRVDLSAV. The span at 870–884 shows a compositional bias: polar residues; that stretch reads DIMNGTRPATGSTRL. Over residues 889–902 the composition is skewed to basic and acidic residues; that stretch reads KSSHSGHRVDLSAV.

Belongs to the G-protein coupled receptor 2 family. Adhesion G-protein coupled receptor (ADGR) subfamily. Heterodimer of 2 chains generated by proteolytic processing; the large extracellular N-terminal fragment and the membrane-bound C-terminal fragment predominantly remain associated and non-covalently linked. Interacts with ESYT1; interaction takes place in absence of cytosolic calcium and inhibits the G protein-coupled receptor activity of ADGRD1. Post-translationally, autoproteolytically processed at the GPS region of the GAIN-B domain; this cleavage modulates receptor activity. Cleavage takes place early in the secretory pathway before N-glycosylation.

The protein localises to the cell membrane. Its activity is regulated as follows. Forms a heterodimer of 2 chains generated by proteolytic processing that remain associated through non-covalent interactions mediated by the GAIN-B domain. In the inactivated receptor, the Stachel sequence (also named stalk) is embedded in the GAIN-B domain, where it adopts a beta-strand conformation. On activation, the Stachel moves into the 7 transmembrane region and adopts a twisted hook-shaped configuration that forms contacts within the receptor, leading to coupling of a G-alpha protein, which activates signaling. The cleaved GAIN-B and N-terminal domains can then dissociate from the rest of the receptor. Interaction with ESYT1 in absence of cytosolic calcium inhibits the G protein-coupled receptor activity; interaction and inhibition is relieved when cytosolic calcium increases. Its function is as follows. Adhesion G-protein coupled receptor (aGPCR) for androgen hormone 5alpha-dihydrotestosterone (5alpha-DHT), also named 17beta-hydroxy-5alpha-androstan-3-one, the most potent hormone among androgens. Also activated by methenolone drug. Ligand binding causes a conformation change that triggers signaling via guanine nucleotide-binding proteins (G proteins) and modulates the activity of downstream effectors, such as adenylate cyclase. ADGRD1 is coupled to G(s) G proteins and mediates activation of adenylate cyclase activity. Acts as a 5alpha-DHT receptor in muscle cells, thereby increasing intracellular cyclic AMP (cAMP) levels and enhancing muscle strength. The sequence is that of Adhesion G-protein coupled receptor D1 (ADGRD1) from Bos taurus (Bovine).